The sequence spans 144 residues: Interleukin-9 (144 aa).

A signal peptide spans 1-18 (MLLAMVLTSALLLCSVAG). Q19 carries the post-translational modification Pyrrolidone carboxylic acid. N-linked (GlcNAc...) asparagine glycans are attached at residues N50, N63, N78, and N114.

The protein belongs to the IL-7/IL-9 family. As to quaternary structure, interacts with IL9R. Interacts with IL2RG.

The protein localises to the secreted. Multifunctional cytokine secreted mainly by T-helper 2 lymphocytes and also mast cells or NKT cells that plays important roles in the immune response against parasites. Affects intestinal epithelial permeability and adaptive immunity. In addition, induces the differentiation of specific T-cell subsets such as IL-17 producing helper T-cells (TH17) and also proliferation and differentiation of mast cells. Mechanistically, exerts its biological effects through a receptor composed of IL9R subunit and a signal transducing subunit IL2RG. Receptor stimulation results in the rapid activation of JAK1 and JAK3 kinase activities leading to STAT1, STAT3 and STAT5-mediated transcriptional programs. Induction of differentiation genes seems to be mediated by STAT1 alone, while protection of cells from apoptosis depends on STAT3 and STAT5. The chain is Interleukin-9 (IL9) from Homo sapiens (Human).